A 213-amino-acid chain; its full sequence is Endonuclease III (213 aa).

Residues 101-120 (LEELLKLPGVGRKTANIVLW) enclose the HhH domain. The [4Fe-4S] cluster site is built by Cys180, Cys187, Cys190, and Cys196.

It belongs to the Nth/MutY family. Requires [4Fe-4S] cluster as cofactor.

It catalyses the reaction 2'-deoxyribonucleotide-(2'-deoxyribose 5'-phosphate)-2'-deoxyribonucleotide-DNA = a 3'-end 2'-deoxyribonucleotide-(2,3-dehydro-2,3-deoxyribose 5'-phosphate)-DNA + a 5'-end 5'-phospho-2'-deoxyribonucleoside-DNA + H(+). DNA repair enzyme that has both DNA N-glycosylase activity and AP-lyase activity. The DNA N-glycosylase activity releases various damaged pyrimidines from DNA by cleaving the N-glycosidic bond, leaving an AP (apurinic/apyrimidinic) site. The AP-lyase activity cleaves the phosphodiester bond 3' to the AP site by a beta-elimination, leaving a 3'-terminal unsaturated sugar and a product with a terminal 5'-phosphate. This chain is Endonuclease III, found in Thermotoga maritima (strain ATCC 43589 / DSM 3109 / JCM 10099 / NBRC 100826 / MSB8).